The sequence spans 213 residues: Urease accessory protein UreG (213 aa).

10–17 (GPVGSGKT) serves as a coordination point for GTP.

The protein belongs to the SIMIBI class G3E GTPase family. UreG subfamily. Homodimer. UreD, UreF and UreG form a complex that acts as a GTP-hydrolysis-dependent molecular chaperone, activating the urease apoprotein by helping to assemble the nickel containing metallocenter of UreC. The UreE protein probably delivers the nickel.

It localises to the cytoplasm. Functionally, facilitates the functional incorporation of the urease nickel metallocenter. This process requires GTP hydrolysis, probably effectuated by UreG. The chain is Urease accessory protein UreG from Deinococcus radiodurans (strain ATCC 13939 / DSM 20539 / JCM 16871 / CCUG 27074 / LMG 4051 / NBRC 15346 / NCIMB 9279 / VKM B-1422 / R1).